The chain runs to 134 residues: Profilin-2 (134 aa).

A disulfide bond links cysteine 13 and cysteine 118. Positions 84 to 100 (AVIRGKKGSGGITIKKT) match the Involved in PIP2 interaction motif. A Phosphothreonine modification is found at threonine 114.

It belongs to the profilin family. Post-translationally, phosphorylated by MAP kinases.

It is found in the cytoplasm. It localises to the cytoskeleton. The chain is Profilin-2 from Olea europaea (Common olive).